A 48-amino-acid polypeptide reads, in one-letter code: Large ribosomal subunit protein bL34 (48 aa).

This sequence belongs to the bacterial ribosomal protein bL34 family.

This Mycoplasma genitalium (strain ATCC 33530 / DSM 19775 / NCTC 10195 / G37) (Mycoplasmoides genitalium) protein is Large ribosomal subunit protein bL34 (rpmH).